An 853-amino-acid polypeptide reads, in one-letter code: cGMP-dependent protein kinase (853 aa).

The segment at 1 to 29 (MEEDDNLKKGNERNKKKAIFSNDDFTGED) is autoinhibitory segment. CNMP-binding domain regions lie at residues 58–173 (VCST…FIDS), 176–275 (VFDM…IVLG), 295–398 (IFKQ…LGNN), and 418–517 (IFRY…LQII). Residues lysine 113, glycine 122, glutamate 123, alanine 125, arginine 132, and serine 133 each contribute to the 3',5'-cyclic GMP site. Residues arginine 473, glycine 482, glutamate 483, alanine 485, arginine 492, and threonine 493 each coordinate 3',5'-cyclic GMP. Positions 541 to 798 (LETERIIGRG…FKDIKDHPFF (258 aa)) constitute a Protein kinase domain. ATP contacts are provided by residues 547 to 555 (IGRGTFGTV) and lysine 570. The active-site Proton acceptor is aspartate 664. Residues 799–853 (SNFNWDKLAGRLLDPPLVSKSETYAEDIDIKQIEEEDAEDDEEPLNDEDNWDIDF) form the AGC-kinase C-terminal domain. Residues 827–853 (DIKQIEEEDAEDDEEPLNDEDNWDIDF) are disordered. Over residues 832–853 (EEEDAEDDEEPLNDEDNWDIDF) the composition is skewed to acidic residues.

It belongs to the protein kinase superfamily. AGC Ser/Thr protein kinase family. cGMP subfamily. In terms of assembly, monomer. Requires Mg(2+) as cofactor. Post-translationally, autophosphorylated.

It localises to the cytoplasm. The protein localises to the endoplasmic reticulum membrane. It catalyses the reaction L-seryl-[protein] + ATP = O-phospho-L-seryl-[protein] + ADP + H(+). The catalysed reaction is L-threonyl-[protein] + ATP = O-phospho-L-threonyl-[protein] + ADP + H(+). With respect to regulation, activated by cGMP. Not activated by cAMP. cGMP binding allosterically triggers a conformational change at the alpha C-helix of cGMP-binding domain 4, which bridges the regulatory and catalytic domains, causing the capping triad, composed of Arg-484, Gln-532 and Asp-533, to form and stabilize the active conformation. The cGMP-binding domains acts cooperatively to activate PKG. Serine/threonine protein kinase which acts as a downstream effector of the second messenger cGMP. Controls the release of Ca(2+) from intracellular stores by regulating phosphoinositide biosynthesis. Ca(2+) signals are essential for merozoite and sporozoite invasion and egress from host hepatocytes and erythrocytes, and, in the mosquito vector, for gametocyte activation, and ookinete and sporozoite motility. During the host liver stage, regulates the initial invasion of host hepatocytes by sporozoites by regulating sporozoite motility and microneme exocytosis. Following parasite development in the hepatocytes, required for the release of merosomes, a vesicle containing the mature merozoites. During the asexual blood stage, required for the progression from schizont to the ring stage following merozoite invasion of host erythrocytes and for merozoite egress. Regulates merozoite egress by promoting the release of exonemes and micronemes which contain proteins essential for egress. Phosphorylates CDPK1 predominantly at the late schizont stage; phosphorylation at 'Ser-64' regulates CDPK1 protein-protein interaction and phosphorylation at 'Thr-231' may regulate CDPK1 kinase activity. In the mosquito vector, required for the initiation of gametogenesis induced by xanthurenic acid, specifically the gametocyte differentiation from the crescent-shaped form to the spherical form. Required for the gliding motility of ookinetes to reach and penetrate the midgut epithelium by promoting Ca(2+)-mediated activation of CDPK1 and CDPK4. Also required for microneme secretion in ookinete by promoting Ca(2+)-mediated activation of CDPK3. The sequence is that of cGMP-dependent protein kinase from Plasmodium falciparum (isolate NF54).